The following is a 1824-amino-acid chain: Vacuolar membrane-associated protein iml1 (1824 aa).

Positions Ser28–Pro41 are enriched in polar residues. Disordered stretches follow at residues Ser28–Thr48, Arg644–Pro682, and Pro719–Ala964. The segment covering Thr646 to Pro659 has biased composition (low complexity). Over residues Phe720–Lys733 the composition is skewed to basic residues. The segment covering Arg734–Ser762 has biased composition (basic and acidic residues). Residues Ser779–Thr799 are compositionally biased toward low complexity. Positions Leu815–Val828 are enriched in polar residues. Low complexity-rich tracts occupy residues Val854 to Ser864 and Ser947 to Lys961. Residues Gly1321–Ser1396 enclose the DEP domain. Disordered stretches follow at residues Arg1406 to Ala1460 and Ser1797 to Thr1824. The span at Asp1444–Ala1460 shows a compositional bias: polar residues. Residues Glu1798 to Asn1807 are compositionally biased toward basic and acidic residues. Low complexity predominate over residues Ser1809–Thr1824.

The protein belongs to the IML1 family.

Its subcellular location is the vacuole membrane. This Aspergillus oryzae (strain ATCC 42149 / RIB 40) (Yellow koji mold) protein is Vacuolar membrane-associated protein iml1 (iml1).